The primary structure comprises 1400 residues: DNA-directed RNA polymerase subunit beta' (1400 aa).

Residues C71, C73, C86, and C89 each coordinate Zn(2+). D462, D464, and D466 together coordinate Mg(2+). Zn(2+)-binding residues include C811, C885, C892, and C895.

The protein belongs to the RNA polymerase beta' chain family. As to quaternary structure, the RNAP catalytic core consists of 2 alpha, 1 beta, 1 beta' and 1 omega subunit. When a sigma factor is associated with the core the holoenzyme is formed, which can initiate transcription. Requires Mg(2+) as cofactor. The cofactor is Zn(2+).

The enzyme catalyses RNA(n) + a ribonucleoside 5'-triphosphate = RNA(n+1) + diphosphate. Functionally, DNA-dependent RNA polymerase catalyzes the transcription of DNA into RNA using the four ribonucleoside triphosphates as substrates. In Brucella melitensis biotype 1 (strain ATCC 23456 / CCUG 17765 / NCTC 10094 / 16M), this protein is DNA-directed RNA polymerase subunit beta'.